The chain runs to 164 residues: uncharacterized protein (164 aa).

This is an uncharacterized protein from Saccharomyces cerevisiae (strain ATCC 204508 / S288c) (Baker's yeast).